A 799-amino-acid polypeptide reads, in one-letter code: Histidine biosynthesis trifunctional protein (799 aa).

The interval 1-229 (MVLPILPLID…FIVEQENVGF (229 aa)) is phosphoribosyl-AMP cyclohydrolase. The tract at residues 230–312 (CHLETMSCFG…FYFALAKLVA (83 aa)) is phosphoribosyl-ATP pyrophosphohydrolase. The interval 313–799 (NDVSLKDVEN…KLGLIPKDFQ (487 aa)) is histidinol dehydrogenase. The Zn(2+) site is built by Q618 and H621. Catalysis depends on residues E687 and H688. Zn(2+) is bound by residues D721 and H780.

This sequence in the C-terminal section; belongs to the histidinol dehydrogenase family. The cofactor is Zn(2+).

The enzyme catalyses 1-(5-phospho-beta-D-ribosyl)-5'-AMP + H2O = 1-(5-phospho-beta-D-ribosyl)-5-[(5-phospho-beta-D-ribosylamino)methylideneamino]imidazole-4-carboxamide. The catalysed reaction is 1-(5-phospho-beta-D-ribosyl)-ATP + H2O = 1-(5-phospho-beta-D-ribosyl)-5'-AMP + diphosphate + H(+). It catalyses the reaction L-histidinol + 2 NAD(+) + H2O = L-histidine + 2 NADH + 3 H(+). The protein operates within amino-acid biosynthesis; L-histidine biosynthesis; L-histidine from 5-phospho-alpha-D-ribose 1-diphosphate: step 2/9. Its pathway is amino-acid biosynthesis; L-histidine biosynthesis; L-histidine from 5-phospho-alpha-D-ribose 1-diphosphate: step 3/9. It participates in amino-acid biosynthesis; L-histidine biosynthesis; L-histidine from 5-phospho-alpha-D-ribose 1-diphosphate: step 9/9. This Saccharomyces cerevisiae (strain ATCC 204508 / S288c) (Baker's yeast) protein is Histidine biosynthesis trifunctional protein.